The sequence spans 288 residues: UDP-3-O-acyl-N-acetylglucosamine deacetylase (288 aa).

Residues His-79, His-236, and Asp-240 each coordinate Zn(2+). The active-site Proton donor is the His-263.

It belongs to the LpxC family. It depends on Zn(2+) as a cofactor.

It carries out the reaction a UDP-3-O-[(3R)-3-hydroxyacyl]-N-acetyl-alpha-D-glucosamine + H2O = a UDP-3-O-[(3R)-3-hydroxyacyl]-alpha-D-glucosamine + acetate. Its pathway is glycolipid biosynthesis; lipid IV(A) biosynthesis; lipid IV(A) from (3R)-3-hydroxytetradecanoyl-[acyl-carrier-protein] and UDP-N-acetyl-alpha-D-glucosamine: step 2/6. Its function is as follows. Catalyzes the hydrolysis of UDP-3-O-myristoyl-N-acetylglucosamine to form UDP-3-O-myristoylglucosamine and acetate, the committed step in lipid A biosynthesis. In Rickettsia bellii (strain OSU 85-389), this protein is UDP-3-O-acyl-N-acetylglucosamine deacetylase.